We begin with the raw amino-acid sequence, 87 residues long: MSERNQRKVYQGRVVSDKMDKTITVVVETYKKHTLYGKRVKYSKKFKAHDENNQAKIGDIVKIMETRPLSATKRFRLVEVVEEAVII.

Belongs to the universal ribosomal protein uS17 family. As to quaternary structure, part of the 30S ribosomal subunit.

One of the primary rRNA binding proteins, it binds specifically to the 5'-end of 16S ribosomal RNA. The polypeptide is Small ribosomal subunit protein uS17 (Bacillus subtilis (strain 168)).